The following is a 241-amino-acid chain: Glutathione S-transferase theta-3 (241 aa).

The region spanning 2–82 (GLELYLDLMS…YLSRKYKAPD (81 aa)) is the GST N-terminal domain. Residues 53-54 (KV) and 66-67 (ES) contribute to the glutathione site. The GST C-terminal domain maps to 88 to 222 (DLQTRARVDE…VVLKAKDMPP (135 aa)).

The protein belongs to the GST superfamily. Theta family. As to quaternary structure, homodimer. In terms of tissue distribution, expressed strongly in liver, and at lower levels in kidney and testis.

The protein localises to the cytoplasm. It catalyses the reaction RX + glutathione = an S-substituted glutathione + a halide anion + H(+). Functionally, conjugation of reduced glutathione to a wide number of exogenous and endogenous hydrophobic electrophiles. Shows high activity towards 4-nitrobenzyl chloride (4-NBC). Also has lower activity towards 1,2-epoxy-3-(p-nitrophenoxy)propane (EPNP), cumene hydroperoxide, 1-chloro-2,4-dinitrobenzene (CDNB), 7-chloro-4-nitrobenzo-2-oxa-1,3-diazole (NBD-Cl), and ethacrynic acid. This is Glutathione S-transferase theta-3 from Mus musculus (Mouse).